Here is a 318-residue protein sequence, read N- to C-terminus: MTKYRIITFDGGGTLGALSLQLLNRLAYQNPKLISETNVFSGNSIGSFTALALASGRSPEETFDFFKDQILPAFSVSRPGGPVFNQQVPYSGLIKAIRTFFPRDLRLRDLKKRIVVPAFHLFAPELNRWNPVLFHNFLGSPYLNEKASDVILRSSAAPATQRAYQNYVDGYTVATNTSTASIAFAVGKAKQPLDQIAVLSIGTGEQPTQLRRDTKGWGMVSADNILPEDMEDLPPNWGVLLDRSPNEPLLPFLQIISGGSSYYESMVSSELLGDQFFRLNPRIPNFSKTDPSVVPALISIANKTNLRPAFQFIERNWN.

Residues Ile-7–Ile-182 enclose the PNPLA domain. The short motif at Gly-11 to Gly-16 is the GXGXXG element. The GXSXG motif lies at Gly-42–Gly-46. Ser-44 acts as the Nucleophile in catalysis. Residue Asp-169 is the Proton acceptor of the active site.

Probable lipid hydrolase. In Priestia megaterium (strain ATCC 14581 / DSM 32 / CCUG 1817 / JCM 2506 / NBRC 15308 / NCIMB 9376 / NCTC 10342 / NRRL B-14308 / VKM B-512 / Ford 19) (Bacillus megaterium), this protein is Protein teg (teg).